The primary structure comprises 380 residues: Queuine tRNA-ribosyltransferase (380 aa).

Asp96 functions as the Proton acceptor in the catalytic mechanism. Substrate-binding positions include 96 to 100, Asp150, Gln193, and Gly220; that span reads DSGGF. Positions 251 to 257 are RNA binding; the sequence is GVGAPDS. The Nucleophile role is filled by Asp270. The interval 275 to 279 is RNA binding; important for wobble base 34 recognition; that stretch reads TRIAR. Cys308, Cys310, Cys313, and His339 together coordinate Zn(2+).

Belongs to the queuine tRNA-ribosyltransferase family. Homodimer. Within each dimer, one monomer is responsible for RNA recognition and catalysis, while the other monomer binds to the replacement base PreQ1. Zn(2+) serves as cofactor.

It catalyses the reaction 7-aminomethyl-7-carbaguanine + guanosine(34) in tRNA = 7-aminomethyl-7-carbaguanosine(34) in tRNA + guanine. It functions in the pathway tRNA modification; tRNA-queuosine biosynthesis. Functionally, catalyzes the base-exchange of a guanine (G) residue with the queuine precursor 7-aminomethyl-7-deazaguanine (PreQ1) at position 34 (anticodon wobble position) in tRNAs with GU(N) anticodons (tRNA-Asp, -Asn, -His and -Tyr). Catalysis occurs through a double-displacement mechanism. The nucleophile active site attacks the C1' of nucleotide 34 to detach the guanine base from the RNA, forming a covalent enzyme-RNA intermediate. The proton acceptor active site deprotonates the incoming PreQ1, allowing a nucleophilic attack on the C1' of the ribose to form the product. After dissociation, two additional enzymatic reactions on the tRNA convert PreQ1 to queuine (Q), resulting in the hypermodified nucleoside queuosine (7-(((4,5-cis-dihydroxy-2-cyclopenten-1-yl)amino)methyl)-7-deazaguanosine). This Streptococcus mutans serotype c (strain ATCC 700610 / UA159) protein is Queuine tRNA-ribosyltransferase.